The following is a 427-amino-acid chain: Adenylosuccinate synthetase (427 aa).

Residues 12–18 (GDEGKGK) and 40–42 (GHT) each bind GTP. The active-site Proton acceptor is the Asp13. 2 residues coordinate Mg(2+): Asp13 and Gly40. IMP contacts are provided by residues 13 to 16 (DEGK), 38 to 41 (NAGH), Thr128, Arg142, Gln223, Thr238, and Arg302. The Proton donor role is filled by His41. Residue 298–304 (TTTGRPR) participates in substrate binding. Residues Arg304, 330–332 (KLD), and 412–414 (AVG) each bind GTP.

Belongs to the adenylosuccinate synthetase family. As to quaternary structure, homodimer. Requires Mg(2+) as cofactor.

The protein localises to the cytoplasm. The catalysed reaction is IMP + L-aspartate + GTP = N(6)-(1,2-dicarboxyethyl)-AMP + GDP + phosphate + 2 H(+). The protein operates within purine metabolism; AMP biosynthesis via de novo pathway; AMP from IMP: step 1/2. Its function is as follows. Plays an important role in the de novo pathway of purine nucleotide biosynthesis. Catalyzes the first committed step in the biosynthesis of AMP from IMP. The polypeptide is Adenylosuccinate synthetase (Moorella thermoacetica (strain ATCC 39073 / JCM 9320)).